We begin with the raw amino-acid sequence, 1017 residues long: Multiple C2 domain and transmembrane region protein 14 (1017 aa).

Residues Met-1–Tyr-110 enclose the C2 1 domain. Positions Ala-139–Pro-231 are disordered. Residues Pro-141–Ala-153 show a composition bias toward low complexity. Residues Thr-154–Asp-213 are compositionally biased toward basic and acidic residues. Residues Ala-217 to Pro-231 show a composition bias toward pro residues. C2 domains lie at Asp-258–Tyr-387, Asp-420–Phe-554, and Val-587–Tyr-714. 5 residues coordinate Ca(2+): Asp-296, Asn-299, Asp-352, Thr-355, and Glu-359. 2 helical membrane passes run Val-851–Ile-871 and Ala-957–Phe-977.

This sequence belongs to the MCTP family. The cofactor is Ca(2+). As to expression, expressed in incipient leaf primordia and in roots meristems. Observed in flowers.

It is found in the membrane. The protein localises to the vesicle. The protein resides in the golgi apparatus membrane. May function as a signaling molecule by regulating the trafficking of other regulators. The polypeptide is Multiple C2 domain and transmembrane region protein 14 (Arabidopsis thaliana (Mouse-ear cress)).